Consider the following 324-residue polypeptide: COP9 signalosome complex subunit 6 (324 aa).

In terms of domain architecture, MPN spans Val38–Ile171.

It belongs to the peptidase M67A family. CSN6 subfamily. In terms of assembly, component of the CSN complex, composed of COPS1/GPS1, COPS2, COPS3, COPS4, COPS5, COPS6, COPS7 (COPS7A or COPS7B), COPS8 and COPS9. In the complex, it probably interacts directly with COPS2, COPS4, COPS5, COPS7 (COPS7A or COPS7B) and COPS9. Interacts with the translation initiation factor EIF3S6. Interacts weakly with RBX1. Directly interacts with COP1 and 14-3-3 protein sigma/SFN. Interacts with ERCC6.

It localises to the cytoplasm. The protein resides in the nucleus. Its function is as follows. Component of the COP9 signalosome complex (CSN), a complex involved in various cellular and developmental processes. The CSN complex is an essential regulator of the ubiquitin (Ubl) conjugation pathway by mediating the deneddylation of the cullin subunits of SCF-type E3 ligase complexes, leading to decrease the Ubl ligase activity of SCF-type complexes such as SCF, CSA or DDB2. The complex is also involved in phosphorylation of p53/TP53, c-jun/JUN, IkappaBalpha/NFKBIA, ITPK1 and IRF8, possibly via its association with CK2 and PKD kinases. CSN-dependent phosphorylation of TP53 and JUN promotes and protects degradation by the Ubl system, respectively. Has some glucocorticoid receptor-responsive activity. Stabilizes COP1 through reducing COP1 auto-ubiquitination and decelerating COP1 turnover rate, hence regulates the ubiquitination of COP1 targets, including SFN. This is COP9 signalosome complex subunit 6 (COPS6) from Bos taurus (Bovine).